The chain runs to 188 residues: Elongation factor P (188 aa).

Lysine 34 carries the N6-(3,6-diaminohexanoyl)-5-hydroxylysine modification.

It belongs to the elongation factor P family. In terms of processing, may be beta-lysylated on the epsilon-amino group of Lys-34 by the combined action of EpmA and EpmB, and then hydroxylated on the C5 position of the same residue by EpmC (if this protein is present). Lysylation is critical for the stimulatory effect of EF-P on peptide-bond formation. The lysylation moiety may extend toward the peptidyltransferase center and stabilize the terminal 3-CCA end of the tRNA. Hydroxylation of the C5 position on Lys-34 may allow additional potential stabilizing hydrogen-bond interactions with the P-tRNA.

Its subcellular location is the cytoplasm. The protein operates within protein biosynthesis; polypeptide chain elongation. Involved in peptide bond synthesis. Alleviates ribosome stalling that occurs when 3 or more consecutive Pro residues or the sequence PPG is present in a protein, possibly by augmenting the peptidyl transferase activity of the ribosome. Modification of Lys-34 is required for alleviation. The sequence is that of Elongation factor P from Klebsiella pneumoniae (strain 342).